The chain runs to 415 residues: Serine hydroxymethyltransferase (415 aa).

Residues Leu117 and 121–123 (GHL) each bind (6S)-5,6,7,8-tetrahydrofolate. The residue at position 226 (Lys226) is an N6-(pyridoxal phosphate)lysine. Residues Glu241 and 349-351 (SPF) each bind (6S)-5,6,7,8-tetrahydrofolate.

It belongs to the SHMT family. In terms of assembly, homodimer. It depends on pyridoxal 5'-phosphate as a cofactor.

Its subcellular location is the cytoplasm. The enzyme catalyses (6R)-5,10-methylene-5,6,7,8-tetrahydrofolate + glycine + H2O = (6S)-5,6,7,8-tetrahydrofolate + L-serine. The protein operates within one-carbon metabolism; tetrahydrofolate interconversion. Its pathway is amino-acid biosynthesis; glycine biosynthesis; glycine from L-serine: step 1/1. Its function is as follows. Catalyzes the reversible interconversion of serine and glycine with tetrahydrofolate (THF) serving as the one-carbon carrier. This reaction serves as the major source of one-carbon groups required for the biosynthesis of purines, thymidylate, methionine, and other important biomolecules. Also exhibits THF-independent aldolase activity toward beta-hydroxyamino acids, producing glycine and aldehydes, via a retro-aldol mechanism. In Geotalea uraniireducens (strain Rf4) (Geobacter uraniireducens), this protein is Serine hydroxymethyltransferase.